The primary structure comprises 361 residues: Uroporphyrinogen decarboxylase (361 aa).

Substrate is bound by residues 44–48 (RQAGR), Asp-93, Tyr-168, Ser-223, and His-337.

It belongs to the uroporphyrinogen decarboxylase family. As to quaternary structure, homodimer.

The protein resides in the cytoplasm. The catalysed reaction is uroporphyrinogen III + 4 H(+) = coproporphyrinogen III + 4 CO2. It participates in porphyrin-containing compound metabolism; protoporphyrin-IX biosynthesis; coproporphyrinogen-III from 5-aminolevulinate: step 4/4. Its function is as follows. Catalyzes the decarboxylation of four acetate groups of uroporphyrinogen-III to yield coproporphyrinogen-III. This Thermobifida fusca (strain YX) protein is Uroporphyrinogen decarboxylase.